The following is a 449-amino-acid chain: Tryptophan--tRNA ligase (449 aa).

ATP-binding positions include 10–12 and 18–19; these read TTT and GN. The short motif at 11–19 is the 'HIGH' region element; sequence TTGTPHLGN. Asp143 is an L-tryptophan binding site. ATP is bound by residues 155 to 157, Leu197, and 204 to 208; these read GRD and KMSKS. The 'KMSKS' region signature appears at 204–208; it reads KMSKS.

Belongs to the class-I aminoacyl-tRNA synthetase family. As to quaternary structure, homodimer.

The protein resides in the cytoplasm. It catalyses the reaction tRNA(Trp) + L-tryptophan + ATP = L-tryptophyl-tRNA(Trp) + AMP + diphosphate + H(+). Functionally, catalyzes the attachment of tryptophan to tRNA(Trp). The protein is Tryptophan--tRNA ligase of Pseudomonas putida (strain ATCC 47054 / DSM 6125 / CFBP 8728 / NCIMB 11950 / KT2440).